A 311-amino-acid polypeptide reads, in one-letter code: Ribonuclease Z (311 aa).

Zn(2+)-binding residues include His61, His63, Asp65, His66, His148, Asp216, and His275. Catalysis depends on Asp65, which acts as the Proton acceptor.

Belongs to the RNase Z family. In terms of assembly, homodimer. Zn(2+) serves as cofactor.

It catalyses the reaction Endonucleolytic cleavage of RNA, removing extra 3' nucleotides from tRNA precursor, generating 3' termini of tRNAs. A 3'-hydroxy group is left at the tRNA terminus and a 5'-phosphoryl group is left at the trailer molecule.. Its function is as follows. Zinc phosphodiesterase, which displays some tRNA 3'-processing endonuclease activity. Probably involved in tRNA maturation, by removing a 3'-trailer from precursor tRNA. This is Ribonuclease Z from Clostridium novyi (strain NT).